The primary structure comprises 172 residues: Ribosome maturation factor RimM (172 aa).

In terms of domain architecture, PRC barrel spans 95–168 (AEGEFYYHQI…RVDVEIMEGL (74 aa)).

It belongs to the RimM family. Binds ribosomal protein uS19.

Its subcellular location is the cytoplasm. Functionally, an accessory protein needed during the final step in the assembly of 30S ribosomal subunit, possibly for assembly of the head region. Essential for efficient processing of 16S rRNA. May be needed both before and after RbfA during the maturation of 16S rRNA. It has affinity for free ribosomal 30S subunits but not for 70S ribosomes. The sequence is that of Ribosome maturation factor RimM from Streptococcus equi subsp. equi (strain 4047).